The sequence spans 1405 residues: MAARSPPSPHPSPPARQLGPRSPRVGRGAEVHAMRSEASGFAGAAREVVADESDKIWVGEEGSGGRRGPGGAAPAHAPLLSAPMGSRRLEGISVEEAMVTRTQLLEEELSSLKEELALCQADKEFVWSLWKRLQVTNPDLTQVVSLVVEREKQKSEAKDRKVLEILQVKDAKIQEFEQRESVLKQEINDLVKRKIAVDEENAFLRKEFSDLEKKFKDKSQEIKDTKECVQNKEEQNRLVIKNLEEENKKLSTRCTDLLNDLEKLRKQEAHLRKEKYSTDAKIKTFEDNLIEARKEVEVSQSKYNALSLQLSNKQTELIQKDMDITLVRKELQELQNLYKQNSTHTAQQAELIQQLQVLNMDTQKVLRNQEDVHTAESISYQKLYNELHICFETTKSNEAMLRQSVTNLQDQLLQKEQENAKLKEKLQESQGAPLPLPQESDPDYSAQVPHRPSLSSLETLMVSQKSEIEYLQEKLKIANEKLSENISANKGFSRKSIMTSAEGKHKEPPVKRSRSLSPKSSFTDSEELQKLRKAERKIENLEKALQLKSQENDELRDAHEKRKERLQMLQTNYRAVKEQLKQWEEGSGMTEIRKIKRADPQQLRQEDSDAVWNELAYFKRENQELMIQKMNLEEELDELKVHISIDKAAIQELNRCVAERREEQLFRSGEDDEVKRSTPEKNGKEMLEQTLQKVTELENRLKSFEKRSRKLKEGNKKLMKENDFLKSLLKQQQEDTETREKELEQIIKGSKDVEKENTELQVKISELETEVTSLRRQVAEANALRNENEELINPMEKSHQSADRAKSEMATMKVRSGRYDCKTTMTKVKFKAAKKNCSVGRHHTVLNHSIKVMSNVFENLSKDGWEDVSESSSDSEAQTSQTLGTIIVETSQKISPTEDGKDQKESDPTEDSQTQGKEIVQTYLNIDGKTPKDYFHDKNAKKPTFQKKNCKMQKSSHTAVPTRVNREKYKNITAQKSSSNIILLRERIISLQQQNSVLQNAKKTAELSVKEYKEVNEKLLHQQQVSDQRFQTSRQTIKKLNLDLAGLRKEKEDLLKKLESSSEITSLAEENSQVTFPRIQVTSLSPSRSMDLEMKQLQYKLKNATNELTKQSSNVKTLKFELLAKEEHIKEMHEKISRMERDITMKRHLIEDLKFRQKVNLESNKSFSEMLQNLDKKVKTLTEECSNKKVSIDSLKQRLNVAVKEKSQYEQMYQKSKEELEKKDLKLTLLVSRISETESAMAEIETAASKQLQELALQSEQVLEGAQKTLLLANEKVEEFTTFVKALAKELQNDVHVVRRQIRELKKMKKNRDACKTSTHKAQTLAASILNISRSDLEEILDTEDQVEIEKTKIDAENDKEWMLYIQKLLEGQSLTLSPRLKCNGAIVAHQNLRLPDSSSSASAS.

The span at 1–14 (MAARSPPSPHPSPP) shows a compositional bias: pro residues. Positions 1–79 (MAARSPPSPH…GGAAPAHAPL (79 aa)) are disordered. Residue alanine 2 is modified to N-acetylalanine. 2 positions are modified to phosphoserine: serine 5 and serine 22. The span at 48 to 58 (VVADESDKIWV) shows a compositional bias: basic and acidic residues. Positions 61–71 (EGSGGRRGPGG) are enriched in gly residues. Positions 95 to 126 (EEAMVTRTQLLEEELSSLKEELALCQADKEFV) form a coiled coil. Disordered regions lie at residues 421–450 (KLKE…QVPH) and 493–529 (SRKS…EELQ). 2 coiled-coil regions span residues 613-655 (NELA…ELNR) and 681-793 (KNGK…ELIN). Residues 865–917 (WEDVSESSSDSEAQTSQTLGTIIVETSQKISPTEDGKDQKESDPTEDSQTQGK) are disordered. Polar residues predominate over residues 877–895 (AQTSQTLGTIIVETSQKIS). Over residues 896–907 (PTEDGKDQKESD) the composition is skewed to basic and acidic residues. Positions 980–1311 (NIILLRERII…IRELKKMKKN (332 aa)) form a coiled coil. Phosphothreonine is present on threonine 1343.

In terms of assembly, interacts with CEP250 and CEP68. Interacts with NEK2; the interaction leads to phosphorylation of CNTLN. Post-translationally, phosphorylated directly or indirectly by NEK2.

It is found in the cytoplasm. It localises to the cytoskeleton. The protein resides in the microtubule organizing center. The protein localises to the centrosome. Its subcellular location is the centriole. Its function is as follows. Required for centrosome cohesion and recruitment of CEP68 to centrosomes. The protein is Centlein (CNTLN) of Homo sapiens (Human).